The following is a 285-amino-acid chain: (3S)-malyl-CoA thioesterase (285 aa).

Substrate-binding residues include R70 and E122. Positions 122 and 148 each coordinate Mg(2+).

Belongs to the HpcH/HpaI aldolase family. As to quaternary structure, homodimer or homotrimer. The cofactor is Mg(2+).

It catalyses the reaction (S)-malyl-CoA + H2O = (S)-malate + CoA + H(+). In terms of biological role, catalyzes the hydrolysis of (3S)-malyl-CoA to (3S)-malate and free CoA. Inactive towards beta-methylmalyl-CoA and other CoA esters. The chain is (3S)-malyl-CoA thioesterase from Cereibacter sphaeroides (strain ATCC 17029 / ATH 2.4.9) (Rhodobacter sphaeroides).